A 281-amino-acid polypeptide reads, in one-letter code: Aminoglycoside N(3)-acetyltransferase IX (281 aa).

Belongs to the antibiotic N-acetyltransferase family.

It catalyses the reaction a 2-deoxystreptamine antibiotic + acetyl-CoA = an N(3)-acetyl-2-deoxystreptamine antibiotic + CoA + H(+). Resistance to neomycin. The protein is Aminoglycoside N(3)-acetyltransferase IX (aacC9) of Micromonospora chalcea.